The sequence spans 291 residues: Flavin-dependent thymidylate synthase (291 aa).

Positions 31 to 241 (GFVRVVDYMG…PMVHAAFVEY (211 aa)) constitute a ThyX domain. Residues Ser-77, 100 to 102 (RHR), and Glu-108 contribute to the FAD site. Residues 97 to 100 (QWVR), 108 to 112 (EYSAR), and Arg-180 each bind dUMP. The ThyX motif motif lies at 100-110 (RHRTASINEYS). 196 to 198 (NLH) is a binding site for FAD. A dUMP-binding site is contributed by Arg-207. Arg-207 functions as the Involved in ionization of N3 of dUMP, leading to its activation in the catalytic mechanism.

Belongs to the thymidylate synthase ThyX family. As to quaternary structure, homotetramer. FAD serves as cofactor.

The enzyme catalyses dUMP + (6R)-5,10-methylene-5,6,7,8-tetrahydrofolate + NADPH + H(+) = dTMP + (6S)-5,6,7,8-tetrahydrofolate + NADP(+). It functions in the pathway pyrimidine metabolism; dTTP biosynthesis. Functionally, catalyzes the reductive methylation of 2'-deoxyuridine-5'-monophosphate (dUMP) to 2'-deoxythymidine-5'-monophosphate (dTMP) while utilizing 5,10-methylenetetrahydrofolate (mTHF) as the methyl donor, and NADPH and FADH(2) as the reductant. In Anaplasma marginale (strain St. Maries), this protein is Flavin-dependent thymidylate synthase.